Consider the following 380-residue polypeptide: Cytochrome b (380 aa).

4 helical membrane-spanning segments follow: residues 33–53, 77–98, 113–133, and 178–198; these read FGSLLGLCLATQILTGLFLAM, WLIRNIHANGASFFFICIYMHI, WNIGVVLLLLTMMTAFVGYVL, and FFAFHFLFPFVIAAATVLHLL. Residues His-83 and His-97 each contribute to the heme b site. 2 residues coordinate heme b: His-182 and His-196. A ubiquinone is bound at residue His-201. The next 4 membrane-spanning stretches (helical) occupy residues 226–246, 288–308, 320–340, and 347–367; these read YKDLLGFVAMLLGLTSLALFA, LGGVLALLFSILVLMVVPILH, LTQFLFWTLVADMLILTWIGG, and FIIIGQIASVIYFTIFLVLAP.

It belongs to the cytochrome b family. In terms of assembly, the cytochrome bc1 complex contains 3 respiratory subunits (MT-CYB, CYC1 and UQCRFS1), 2 core proteins (UQCRC1 and UQCRC2) and probably 6 low-molecular weight proteins. Heme b serves as cofactor.

The protein localises to the mitochondrion inner membrane. Functionally, component of the ubiquinol-cytochrome c reductase complex (complex III or cytochrome b-c1 complex) that is part of the mitochondrial respiratory chain. The b-c1 complex mediates electron transfer from ubiquinol to cytochrome c. Contributes to the generation of a proton gradient across the mitochondrial membrane that is then used for ATP synthesis. The protein is Cytochrome b (mt-cyb) of Salmo salar (Atlantic salmon).